Reading from the N-terminus, the 166-residue chain is Protein YciF (166 aa).

As to quaternary structure, homodimer.

This chain is Protein YciF (yciF), found in Escherichia coli (strain K12).